Here is a 493-residue protein sequence, read N- to C-terminus: Matrilin-1 (493 aa).

A signal peptide spans 1-23 (MDGIFCALPLSLLLLLQSCGVWG). The VWFA 1 domain maps to 24 to 220 (APPQPRGTLC…THKFQEAFCV (197 aa)). N-linked (GlcNAc...) asparagine glycosylation occurs at N74. The EGF-like domain occupies 221 to 261 (VSDLCATGDHDCEQICISTPGSYKCACKEGFTLNNDGKTCS). Disulfide bonds link C225-C236, C232-C245, and C247-C260. A VWFA 2 domain is found at 262–450 (ACSGGSGSAL…GKKLQMKICV (189 aa)). A coiled-coil region spans residues 462 to 492 (KFQTKVEELINTLQQKLEAVAKRIEALENKI).

In terms of assembly, homotrimer. As to expression, expressed in xyphoid cartilage and chondrocytes (at protein level).

The protein localises to the secreted. The protein resides in the extracellular space. It localises to the extracellular matrix. Its function is as follows. A major component of the extracellular matrix of non-articular cartilage. Binds to type 2 collagens and forms long concatenated protein networks as part of the extracellular matrix. Required for the network-like organization and bundling of collagen fibrils surrounding chondrocytes in the zones of maturation and hypertrophy. Required for mechanotransduction and adaption to mechanical loading in cartilage chondrocytes, resulting in an increase in expression of the extracellular matrix components ACAN and COL2A1. Acts as a moderator of angiogenesis in response to injury. In Gallus gallus (Chicken), this protein is Matrilin-1.